We begin with the raw amino-acid sequence, 246 residues long: Proteasome subunit alpha type-6-A (246 aa).

Belongs to the peptidase T1A family. As to quaternary structure, component of the 20S core complex of the 26S proteasome. The 26S proteasome is composed of a core protease (CP), known as the 20S proteasome, capped at one or both ends by the 19S regulatory particle (RP/PA700). The 20S proteasome core is composed of 28 subunits that are arranged in four stacked rings, resulting in a barrel-shaped structure. The two end rings are each formed by seven alpha subunits, and the two central rings are each formed by seven beta subunits. The catalytic chamber with the active sites is on the inside of the barrel. As to expression, ubiquitous low levels, higher expression in siliques and flowers.

It is found in the cytoplasm. The protein resides in the nucleus. The proteasome is a multicatalytic proteinase complex which is characterized by its ability to cleave peptides with Arg, Phe, Tyr, Leu, and Glu adjacent to the leaving group at neutral or slightly basic pH. The proteasome has an ATP-dependent proteolytic activity. The polypeptide is Proteasome subunit alpha type-6-A (PAA1) (Arabidopsis thaliana (Mouse-ear cress)).